The sequence spans 213 residues: U1 small nuclear ribonucleoprotein C (213 aa).

The Matrin-type zinc-finger motif lies at 4–36 (YYCDYCDTYLTHDSPSVRKQHNAGYKHKANVRS). Positions 143-166 (APSMPMPPLNSLPRPPTMNVPPAV) are enriched in pro residues. The segment at 143–213 (APSMPMPPLN…INAQGPEANH (71 aa)) is disordered. The span at 167 to 180 (PGSTSTPTSGGAPS) shows a compositional bias: low complexity.

It belongs to the U1 small nuclear ribonucleoprotein C family. In terms of assembly, U1 snRNP is composed of the 7 core Sm proteins B/B', D1, D2, D3, E, F and G that assemble in a heptameric protein ring on the Sm site of the small nuclear RNA to form the core snRNP, and at least 3 U1 snRNP-specific proteins U1-70K, U1-A and U1-C. U1-C interacts with U1 snRNA and the 5' splice-site region of the pre-mRNA.

The protein localises to the nucleus. Component of the spliceosomal U1 snRNP, which is essential for recognition of the pre-mRNA 5' splice-site and the subsequent assembly of the spliceosome. U1-C is directly involved in initial 5' splice-site recognition for both constitutive and regulated alternative splicing. The interaction with the 5' splice-site seems to precede base-pairing between the pre-mRNA and the U1 snRNA. Stimulates commitment or early (E) complex formation by stabilizing the base pairing of the 5' end of the U1 snRNA and the 5' splice-site region. The sequence is that of U1 small nuclear ribonucleoprotein C from Vitis vinifera (Grape).